An 856-amino-acid chain; its full sequence is Subtilisin-like protease SBT2.2 (856 aa).

The signal sequence occupies residues 1 to 21 (MRRVLMVNFGVLLLFCFGVLS). A propeptide spans 22–159 (NSFGQDNGGD…IVLDFSVRTA (138 aa)) (activation peptide). N-linked (GlcNAc...) asparagine glycosylation is found at N35 and N85. The Inhibitor I9 domain occupies 40 to 159 (VYIVTLRQAS…IVLDFSVRTA (120 aa)). In terms of domain architecture, Peptidase S8 spans 164 to 709 (PQFMGLPKGA…NGFVNATAAL (546 aa)). The active-site Charge relay system is the D193. Residues N204 and N255 are each glycosylated (N-linked (GlcNAc...) asparagine). H269 (charge relay system) is an active-site residue. N-linked (GlcNAc...) asparagine glycosylation is found at N412, N441, N495, N540, and N568. The 97-residue stretch at 432 to 528 (MISALDALKN…MDMPGIIIPS (97 aa)) folds into the PA domain. Catalysis depends on S634, which acts as the Charge relay system. 7 N-linked (GlcNAc...) asparagine glycosylation sites follow: N704, N730, N738, N748, N767, N782, and N823.

It belongs to the peptidase S8 family.

The protein localises to the secreted. The sequence is that of Subtilisin-like protease SBT2.2 from Arabidopsis thaliana (Mouse-ear cress).